The chain runs to 621 residues: Chaperone protein HscA homolog (621 aa).

It belongs to the heat shock protein 70 family.

In terms of biological role, chaperone involved in the maturation of iron-sulfur cluster-containing proteins. Has a low intrinsic ATPase activity which is markedly stimulated by HscB. This chain is Chaperone protein HscA homolog, found in Cupriavidus pinatubonensis (strain JMP 134 / LMG 1197) (Cupriavidus necator (strain JMP 134)).